Reading from the N-terminus, the 101-residue chain is Chaperone modulatory protein CbpM (101 aa).

Belongs to the CbpM family.

Interacts with CbpA and inhibits both the DnaJ-like co-chaperone activity and the DNA binding activity of CbpA. Together with CbpA, modulates the activity of the DnaK chaperone system. Does not inhibit the co-chaperone activity of DnaJ. This is Chaperone modulatory protein CbpM from Salmonella agona (strain SL483).